Here is a 766-residue protein sequence, read N- to C-terminus: Leucine-rich repeat and fibronectin type III domain-containing protein 1 (766 aa).

Positions 1 to 31 (MAPGPFSSGLFSPPPAALPFLLLLWAGASRG) are cleaved as a signal peptide. The 34-residue stretch at 32–65 (QPCPGRCICQNVAPTLTMLCAKTGLLFVPPAIDR) folds into the LRRNT domain. The Extracellular segment spans residues 32 to 536 (QPCPGRCICQ…LRAHFLGGTM (505 aa)). LRR repeat units follow at residues 66-87 (RVVE…DFAN), 90-111 (SLVH…AFAD), 114-135 (ALRA…QLRG), 138-159 (NLRH…AFDA), 163-184 (TVED…AVGQ), 187-208 (NLNT…TFVQ), and 211-232 (KLVR…GLFL). Residue asparagine 87 is glycosylated (N-linked (GlcNAc...) asparagine). The LRRCT domain maps to 252-298 (NPLHCNCELLWLRRLTREDDLETCATPEHLTDRYFWSIPEEEFLCEP). The 88-residue stretch at 299–386 (PLITRQAGGR…GEATAPVEVC (88 aa)) folds into the Ig-like domain. A disulfide bridge links cysteine 321 with cysteine 370. Asparagine 343 is a glycosylation site (N-linked (GlcNAc...) asparagine). The disordered stretch occupies residues 397 to 424 (PAAPPPLTEPGSSDIATPGRPGANDSTS). In terms of domain architecture, Fibronectin type-III spans 424 to 520 (SERRLVAAEL…GCVQFTTAGD (97 aa)). Residues 537–557 (IIAIGGVIVASVLVFIVLLMI) traverse the membrane as a helical segment. Topologically, residues 558-766 (RYKVYGDGDS…STEWMLESTV (209 aa)) are cytoplasmic. Disordered regions lie at residues 568–601 (RRIK…PPAP) and 645–742 (LCLL…GEDG). Serine 713 bears the Phosphoserine mark. Basic residues predominate over residues 714-727 (YPRRARRTKRHRST). A PDZ-binding motif is present at residues 763–766 (ESTV).

This sequence belongs to the LRFN family. As to quaternary structure, can form heteromeric complexes with LRFN2, LRFN3, LRFN4 and LRFN5. Forms homomeric complexes, but not across cell junctions. Interacts with DLG4. Also interacts with DLG1, DLG2, and DLG3. Interacts with 2 AMPA receptor subunits GRIA1 and GRIA2 and NMDA receptor subunit GRIN1. Glycosylated. In terms of tissue distribution, predominantly expressed in the brain, with a weak, but broad expression in the cerebral cortex and diencephalic nuclei. Also detected in other parts of the central nervous system, including the olfactory bulb, pons, cerebellum, and medulla oblongata, as well as in the peripheral nervous system, such as the ganglia of cranial nerves and the dorsal root ganglion during gestation.

It is found in the membrane. The protein resides in the synapse. It localises to the postsynaptic density membrane. Functionally, promotes neurite outgrowth in hippocampal neurons. Involved in the regulation and maintenance of excitatory synapses. Induces the clustering of excitatory postsynaptic proteins, including DLG4, DLGAP1, GRIA1 and GRIN1. This is Leucine-rich repeat and fibronectin type III domain-containing protein 1 (Lrfn1) from Mus musculus (Mouse).